The primary structure comprises 469 residues: Spliceosome-associated protein CWC27 homolog (469 aa).

An N-acetylserine modification is found at Ser-2. The 156-residue stretch at 11 to 166 (TNGKVLLKTT…NPHRIKSCEV (156 aa)) folds into the PPIase cyclophilin-type domain. The segment covering 175–193 (TPREIKKPKNEKPEEEVKK) has biased composition (basic and acidic residues). Disordered stretches follow at residues 175-415 (TPRE…DDEG) and 428-469 (RKVK…KERR). The stretch at 206 to 229 (SFGEEAEEEEEEVNRVSQSMKGRS) forms a coiled coil. A compositionally biased stretch (basic and acidic residues) spans 231–241 (SSHDLLKDDPH). Residues 256–278 (TGDLEDDGEDDSAERDEYMEDDE) show a composition bias toward acidic residues. Basic and acidic residues-rich tracts occupy residues 302–341 (GDGE…KVEE) and 356–368 (EYRR…EALR). Residues 309–371 (ASRSEELRKE…QKYEALRKQQ (63 aa)) adopt a coiled-coil conformation. The segment covering 384–403 (ALLSQFKSKLTQAITETPEN) has biased composition (polar residues). The span at 454–469 (RREESKKLLREKKERR) shows a compositional bias: basic and acidic residues.

It belongs to the cyclophilin-type PPIase family. Part of the activated spliceosome B/catalytic step 1 spliceosome, one of the forms of the spliceosome which has a well-formed active site but still cannot catalyze the branching reaction and is composed at least of 52 proteins, the U2, U5 and U6 snRNAs and the pre-mRNA. Recruited during early steps of activated spliceosome B maturation, it is probably one of the first proteins released from this complex as he matures to the spliceosome C complex. Component of the minor spliceosome, which splices U12-type introns.

It is found in the nucleus. As part of the spliceosome, plays a role in pre-mRNA splicing. Probable inactive PPIase with no peptidyl-prolyl cis-trans isomerase activity. As a component of the minor spliceosome, involved in the splicing of U12-type introns in pre-mRNAs. The chain is Spliceosome-associated protein CWC27 homolog from Mus musculus (Mouse).